We begin with the raw amino-acid sequence, 1571 residues long: MEQPTTIQILGRDSIVADFGIWRRHVARDLLETLSSSTYILISDTNIAPLYVPEFERAFEEAAAEKSPKPRLLTYKIAPGESSKGRETKAEIEDWMLSCQPPCGRDTVLIALGGGVIGDLAGFVAATYMRGIRFVQVPTTLLAMVDSSIGGKTAIDTPNGKNLIGAIWQPEKIYLDMEFLNTLPQREFTNGMAEVIKTAAISSETTFAELEQNADAIAAALKTENTPERSRFSGIQEILKRTILASARFKADVVSKDEREGGLRNLLNFGHSIGHAIEAILAPQILHGECVAIGMIKEVELARYLGILKGAAVARLAKCLTRYGLPTSLKDARIRRLSAGKKCPVDKLIAFMAVDKKNDGPMKKVVLLSAIGRTHEQKASVVSNEELKVVLAPSIEVLPGIPKPLNVTCTPPGSKSISNRALVLAALGSGVCRIRNLLHSDDTEVMLNALEALGAATFSWEEEGEVLVVNGKGGKLEASAHELYLGNAGTASRFLTTVATLSNEKDDVSHNILTGNARMKQRPIGDLVDALKSNGVSVDYLEQQGSLPLKVPACGGFKGGAIELAAKVSSQYVSSLLMCAPYAKEKVTLKLVGGKPISETYIAMTAAMMKSFGIDVEKSTTEEYTYHIQQGQYKNPPEYIIESDASSATYPLAIAAMSGTTCTIPNIGSKSLQGDARFAVDVLRPMGCDVKQTNSSTTVTGPTNGALKPIANVDMEPMTDAFLTASVLAAVANDKSGNTTRIYGIANQRVKECNRIKAMKDELAKFGVTCREHDDGIEIDGIDSSELKVPVNGVHCYDDHRVAMSFSVLAAAAASQPTLILEKECVGKTWPAWWDALAQTFKVKLDGKELVNDNVVDIQKSTKSIASIFIIGMRGAGKTTSGYSISKALNRPFIDLDTELENVEGMPIPEIIKQKGWEGFRDAELALLKRMMAEKPTGYIFACGGGIVETKEARDLLINYHKNKGNVFLIMRNIKKVIEFLEIDKTRPAYIEDMMGVWLRREPWYQECSNLQYYSHHSERSELDAALQGFTRFLNVVMGNTDHLALLKKKDHSFFVSLTLPDLQLSADILRAATFGSDAIELRVDLLKDPSSTSGVPSVGYVAEQMSFLRSHASQPLIFTIRTKAQGGQFPDDAVDKALELYKLAIRMGSEFVDLELSFPNDLLHAVTEMKGFSKIIASHHDVNSQLSWSNGSWIQYYNKALQHGDIIKLIGVAKTFEDNMALQQFKSWAEKSYPVPIIAINMGNKGRLSRILNRFMTPVSHPALPFKAAPGQVSAKDIRQALTLMGELDAKKFALFGKPISASRSPALHNALFTQAGFPHDYGLLETDKAENVEKFIRSDDFGGASVTIPLKEQIMGLLDEISPEAKIIGAVNTIVPITVSGRPPRLIGYNTDWQGMARCLKDAGAICSNNGESALTIGSGGTARAAIYSLHSMGYSPIYLVGRTPSNLSKLASSFPAEYNIQVVQDIKSVQAAPKVAISTIPGDQELENPLPELITQIMEKGQDSSRECILLDMAYKPDVTTMARLASPAGWKIIKGLEVLVAQGIYQFEHWTGLMPIYEDARAAVMNI.

Positions 1-384 (MEQPTTIQIL…HEQKASVVSN (384 aa)) are 3-dehydroquinate synthase. NAD(+) is bound by residues 44-46 (DTN), 81-84 (ESSK), 114-116 (GGV), and D119. Position 130 (R130) interacts with 7-phospho-2-dehydro-3-deoxy-D-arabino-heptonate. 139–140 (TT) is an NAD(+) binding site. 7-phospho-2-dehydro-3-deoxy-D-arabino-heptonate contacts are provided by D146 and K152. Residue K161 participates in NAD(+) binding. N162 contacts 7-phospho-2-dehydro-3-deoxy-D-arabino-heptonate. NAD(+) is bound by residues 179–182 (FLNT) and N190. E194 serves as a coordination point for Zn(2+). 7-phospho-2-dehydro-3-deoxy-D-arabino-heptonate contacts are provided by residues 194 to 197 (EVIK) and K250. Catalysis depends on E260, which acts as the Proton acceptor; for 3-dehydroquinate synthase activity. 7-phospho-2-dehydro-3-deoxy-D-arabino-heptonate-binding positions include 264–268 (RNLLN) and H271. H271 is a binding site for Zn(2+). H275 functions as the Proton acceptor; for 3-dehydroquinate synthase activity in the catalytic mechanism. 7-phospho-2-dehydro-3-deoxy-D-arabino-heptonate-binding residues include H287 and K356. H287 contributes to the Zn(2+) binding site. The interval 397 to 843 (VLPGIPKPLN…WDALAQTFKV (447 aa)) is EPSP synthase. Residue C825 is the For EPSP synthase activity of the active site. The segment at 866–1057 (ASIFIIGMRG…KKKDHSFFVS (192 aa)) is shikimate kinase. An ATP-binding site is contributed by 872–879 (GMRGAGKT). The tract at residues 1058-1278 (LTLPDLQLSA…AAPGQVSAKD (221 aa)) is 3-dehydroquinase. H1181 acts as the Proton acceptor; for 3-dehydroquinate dehydratase activity in catalysis. Residue K1209 is the Schiff-base intermediate with substrate; for 3-dehydroquinate dehydratase activity of the active site. Residues 1291 to 1571 (AKKFALFGKP…EDARAAVMNI (281 aa)) form a shikimate dehydrogenase region.

It in the N-terminal section; belongs to the sugar phosphate cyclases superfamily. Dehydroquinate synthase family. The protein in the 2nd section; belongs to the EPSP synthase family. This sequence in the 3rd section; belongs to the shikimate kinase family. In the 4th section; belongs to the type-I 3-dehydroquinase family. It in the C-terminal section; belongs to the shikimate dehydrogenase family. In terms of assembly, homodimer. The cofactor is Zn(2+).

It localises to the cytoplasm. The catalysed reaction is 7-phospho-2-dehydro-3-deoxy-D-arabino-heptonate = 3-dehydroquinate + phosphate. It catalyses the reaction 3-dehydroquinate = 3-dehydroshikimate + H2O. The enzyme catalyses shikimate + NADP(+) = 3-dehydroshikimate + NADPH + H(+). It carries out the reaction shikimate + ATP = 3-phosphoshikimate + ADP + H(+). The catalysed reaction is 3-phosphoshikimate + phosphoenolpyruvate = 5-O-(1-carboxyvinyl)-3-phosphoshikimate + phosphate. It functions in the pathway metabolic intermediate biosynthesis; chorismate biosynthesis; chorismate from D-erythrose 4-phosphate and phosphoenolpyruvate: step 2/7. Its pathway is metabolic intermediate biosynthesis; chorismate biosynthesis; chorismate from D-erythrose 4-phosphate and phosphoenolpyruvate: step 3/7. It participates in metabolic intermediate biosynthesis; chorismate biosynthesis; chorismate from D-erythrose 4-phosphate and phosphoenolpyruvate: step 4/7. The protein operates within metabolic intermediate biosynthesis; chorismate biosynthesis; chorismate from D-erythrose 4-phosphate and phosphoenolpyruvate: step 5/7. It functions in the pathway metabolic intermediate biosynthesis; chorismate biosynthesis; chorismate from D-erythrose 4-phosphate and phosphoenolpyruvate: step 6/7. Its function is as follows. The AROM polypeptide catalyzes 5 consecutive enzymatic reactions in prechorismate polyaromatic amino acid biosynthesis. The protein is Pentafunctional AROM polypeptide of Arthroderma otae (strain ATCC MYA-4605 / CBS 113480) (Microsporum canis).